Reading from the N-terminus, the 170-residue chain is Heat shock protein beta-7 (170 aa).

Residues Met-1 to Pro-39 are disordered. The segment at Met-1–Gly-71 is required for localization to SC35 splicing speckles. The segment covering His-16–Ser-31 has biased composition (low complexity). Residues Pro-62–Ile-170 enclose the sHSP domain.

It belongs to the small heat shock protein (HSP20) family. Interacts with C-terminal domain of actin-binding protein 280. As to expression, isoform 1 is highly expressed in adult and fetal heart, skeletal muscle, and at a much lower levels in adipose tissue and in aorta. Undetectable in other tissues. Isoform 2 and isoform 3 are poorly detected in heart.

The protein localises to the cytoplasm. Its subcellular location is the nucleus. It localises to the cajal body. This chain is Heat shock protein beta-7 (HSPB7), found in Homo sapiens (Human).